The primary structure comprises 432 residues: Adenylosuccinate synthetase (432 aa).

GTP is bound by residues 13 to 19 (GDEGKGK) and 41 to 43 (GHT). Aspartate 14 (proton acceptor) is an active-site residue. Residues aspartate 14 and glycine 41 each coordinate Mg(2+). IMP contacts are provided by residues 14–17 (DEGK), 39–42 (NAGH), threonine 130, arginine 144, glutamine 225, threonine 240, and arginine 304. Histidine 42 serves as the catalytic Proton donor. Residue 300–306 (AVTGRPR) participates in substrate binding. GTP is bound by residues arginine 306, 332–334 (KLD), and 415–417 (STG).

The protein belongs to the adenylosuccinate synthetase family. As to quaternary structure, homodimer. It depends on Mg(2+) as a cofactor.

Its subcellular location is the cytoplasm. It carries out the reaction IMP + L-aspartate + GTP = N(6)-(1,2-dicarboxyethyl)-AMP + GDP + phosphate + 2 H(+). The protein operates within purine metabolism; AMP biosynthesis via de novo pathway; AMP from IMP: step 1/2. Functionally, plays an important role in the de novo pathway of purine nucleotide biosynthesis. Catalyzes the first committed step in the biosynthesis of AMP from IMP. In Haemophilus ducreyi (strain 35000HP / ATCC 700724), this protein is Adenylosuccinate synthetase.